The sequence spans 234 residues: Geranylgeranylglyceryl phosphate synthase (234 aa).

Aspartate 24 and serine 52 together coordinate Mg(2+). Sn-glycerol 1-phosphate is bound by residues tyrosine 172–glycine 178, glycine 203–glycine 204, and glycine 225–threonine 226.

Belongs to the GGGP/HepGP synthase family. Group II subfamily. As to quaternary structure, homodimer. It depends on Mg(2+) as a cofactor.

It catalyses the reaction sn-glycerol 1-phosphate + (2E,6E,10E)-geranylgeranyl diphosphate = sn-3-O-(geranylgeranyl)glycerol 1-phosphate + diphosphate. In terms of biological role, prenyltransferase that catalyzes the transfer of the geranylgeranyl moiety of geranylgeranyl diphosphate (GGPP) to the C3 hydroxyl of sn-glycerol-1-phosphate (G1P). This is Geranylgeranylglyceryl phosphate synthase from Zunongwangia profunda (strain DSM 18752 / CCTCC AB 206139 / SM-A87) (Wangia profunda).